A 279-amino-acid polypeptide reads, in one-letter code: Type III pantothenate kinase (279 aa).

6 to 13 (DIGNTLSK) provides a ligand contact to ATP. Residues Tyr-92 and 99 to 102 (GVDR) each bind substrate. The active-site Proton acceptor is Asp-101. Asp-120 contacts K(+). Ser-123 serves as a coordination point for ATP. Thr-177 is a substrate binding site.

This sequence belongs to the type III pantothenate kinase family. As to quaternary structure, homodimer. The cofactor is NH4(+). K(+) is required as a cofactor.

The protein resides in the cytoplasm. The catalysed reaction is (R)-pantothenate + ATP = (R)-4'-phosphopantothenate + ADP + H(+). It participates in cofactor biosynthesis; coenzyme A biosynthesis; CoA from (R)-pantothenate: step 1/5. Catalyzes the phosphorylation of pantothenate (Pan), the first step in CoA biosynthesis. This Chromohalobacter salexigens (strain ATCC BAA-138 / DSM 3043 / CIP 106854 / NCIMB 13768 / 1H11) protein is Type III pantothenate kinase.